We begin with the raw amino-acid sequence, 362 residues long: RING finger protein 32 (362 aa).

The segment at 127-169 adopts an RING-type 1; atypical zinc-finger fold; it reads CPICKEEFELRPQVLLSCSHVFHRACLQAFEKFTNKKTCPLCR. The region spanning 186 to 215 is the IQ domain; the sequence is RIKCVTRIQAYWRGYVVRKWYRNLRETVPP. The RING-type 2; atypical zinc finger occupies 293-352; the sequence is CSICLAPLSPAGGQRVGAGQRSRETALLSCSHVFHHACLLALEEFSVGDRPPFHACPLCR.

Its subcellular location is the cytoplasm. Its function is as follows. May play a role in sperm formation. This Macaca fascicularis (Crab-eating macaque) protein is RING finger protein 32 (RNF32).